Consider the following 474-residue polypeptide: Transcription factor fscB (474 aa).

Disordered stretches follow at residues 114-153 (VDEL…SYWT) and 207-242 (GKEV…NPAP). Positions 120–131 (SSDTRSSLSPSS) are enriched in low complexity. Residues 132–153 (HNTTTGHETGLSSVTPPQSYWT) show a composition bias toward polar residues. The segment covering 207–221 (GKEVTKRNKRSRTEA) has biased composition (basic and acidic residues). Residues 222 to 240 (QEASNSPCASSTADSQTNP) show a composition bias toward polar residues.

It belongs to the POU transcription factor family. Class-3 subfamily.

The protein resides in the nucleus. Its function is as follows. Transcription factor; part of the fragmented gene cluster that mediates the biosynthesis of fusarochromene, a tryptophan-derived metabolite closely related to a group of mycotoxins including fusarochromanone. This Fusarium equiseti (Fusarium scirpi) protein is Transcription factor fscB.